An 84-amino-acid chain; its full sequence is Large ribosomal subunit protein bL27 (84 aa).

This sequence belongs to the bacterial ribosomal protein bL27 family.

The sequence is that of Large ribosomal subunit protein bL27 from Buchnera aphidicola subsp. Schizaphis graminum (strain Sg).